Consider the following 427-residue polypeptide: Serine hydroxymethyltransferase (427 aa).

A (6S)-5,6,7,8-tetrahydrofolate-binding site is contributed by 120-122 (GHI). Lysine 226 is subject to N6-(pyridoxal phosphate)lysine.

The protein belongs to the SHMT family. As to quaternary structure, homodimer. Requires pyridoxal 5'-phosphate as cofactor.

It is found in the cytoplasm. It functions in the pathway amino-acid biosynthesis; glycine biosynthesis; glycine from L-serine: step 1/1. Its function is as follows. Catalyzes the reversible interconversion of serine and glycine with a modified folate serving as the one-carbon carrier. Also exhibits a pteridine-independent aldolase activity toward beta-hydroxyamino acids, producing glycine and aldehydes, via a retro-aldol mechanism. This is Serine hydroxymethyltransferase from Pyrococcus abyssi (strain GE5 / Orsay).